The sequence spans 189 residues: Thymidine kinase (189 aa).

ATP-binding positions include 9 to 16 (GTMNSGKT) and 85 to 88 (DECQ). Residue glutamate 86 is the Proton acceptor of the active site. 4 residues coordinate Zn(2+): cysteine 143, cysteine 146, cysteine 180, and histidine 183.

It belongs to the thymidine kinase family. As to quaternary structure, homotetramer.

It is found in the cytoplasm. The catalysed reaction is thymidine + ATP = dTMP + ADP + H(+). The polypeptide is Thymidine kinase (Streptococcus agalactiae serotype Ia (strain ATCC 27591 / A909 / CDC SS700)).